A 157-amino-acid polypeptide reads, in one-letter code: Mannose-specific lectin (157 aa).

Residues 1 to 19 (MAKASLLILAAIFLGVITP) constitute a signal peptide (or 23; in 70% of the molecules). A Bulb-type lectin domain is found at 24–132 (DNILYSGETL…DRWATGTHTG (109 aa)). Q49, D51, N53, Y57, D60, K61, W64, A65, N67, Q80, D82, N84, Y88, I95, W96, N99, N106, Q112, D114, N116, Y120, and W125 together coordinate alpha-D-mannopyranose. A disulfide bridge connects residues C52 and C75. The propeptide at 129–157 (THTGLVGIPASPPSEKYPTAGKIKLVTAK) is removed in mature form.

As to quaternary structure, homotetramer.

It localises to the secreted. Its function is as follows. Mannose-specific lectin which binds alpha-D-linked mannose. Displays a high affinity for alpha-(1-3)-mannose oligomers. Displays antiviral activity and therefore may contribute to defense against infections. This Galanthus nivalis (Common snowdrop) protein is Mannose-specific lectin.